The primary structure comprises 491 residues: Probable cytosol aminopeptidase (491 aa).

Mn(2+) is bound by residues Lys-260 and Asp-265. Lys-272 is an active-site residue. 3 residues coordinate Mn(2+): Asp-284, Asp-343, and Glu-345. Residue Arg-347 is part of the active site.

Belongs to the peptidase M17 family. The cofactor is Mn(2+).

The protein localises to the cytoplasm. The catalysed reaction is Release of an N-terminal amino acid, Xaa-|-Yaa-, in which Xaa is preferably Leu, but may be other amino acids including Pro although not Arg or Lys, and Yaa may be Pro. Amino acid amides and methyl esters are also readily hydrolyzed, but rates on arylamides are exceedingly low.. It carries out the reaction Release of an N-terminal amino acid, preferentially leucine, but not glutamic or aspartic acids.. Presumably involved in the processing and regular turnover of intracellular proteins. Catalyzes the removal of unsubstituted N-terminal amino acids from various peptides. In Rippkaea orientalis (strain PCC 8801 / RF-1) (Cyanothece sp. (strain PCC 8801)), this protein is Probable cytosol aminopeptidase.